Consider the following 511-residue polypeptide: V-type proton ATPase subunit B, brain isoform (511 aa).

Arg-400 contacts ATP.

It belongs to the ATPase alpha/beta chains family. As to quaternary structure, V-ATPase is a heteromultimeric enzyme made up of two complexes: the ATP-hydrolytic V1 complex and the proton translocation V0 complex. The V1 complex consists of three catalytic AB heterodimers that form a heterohexamer, three peripheral stalks each consisting of EG heterodimers, one central rotor including subunits D and F, and the regulatory subunits C and H. The proton translocation complex V0 consists of the proton transport subunit a, a ring of proteolipid subunits c9c'', rotary subunit d, subunits e and f, and the accessory subunits ATP6AP1/Ac45 and ATP6AP2/PRR. As to expression, kidney; localizes to early distal nephron, encompassing thick ascending limbs and distal convoluted tubules (at protein level).

Its subcellular location is the apical cell membrane. The protein resides in the melanosome. It is found in the cytoplasm. It localises to the cytoplasmic vesicle. The protein localises to the secretory vesicle. Its subcellular location is the synaptic vesicle membrane. The protein resides in the clathrin-coated vesicle membrane. Non-catalytic subunit of the V1 complex of vacuolar(H+)-ATPase (V-ATPase), a multisubunit enzyme composed of a peripheral complex (V1) that hydrolyzes ATP and a membrane integral complex (V0) that translocates protons. V-ATPase is responsible for acidifying and maintaining the pH of intracellular compartments and in some cell types, is targeted to the plasma membrane, where it is responsible for acidifying the extracellular environment. In renal intercalated cells, can partially compensate the lack of ATP6V1B1 and mediate secretion of protons (H+) into the urine under base-line conditions but not in conditions of acid load. This is V-type proton ATPase subunit B, brain isoform (ATP6V1B2) from Homo sapiens (Human).